Here is a 309-residue protein sequence, read N- to C-terminus: MTVTVKMLVDKLKLKVVYGNEELLAKAITTADISRPGLEMTGYFDYYSPERLQLVGMKEWSYLKTMTANNRYSVFANIFREETPAVVVARGLEIPEEMLQAAKENGVAVLQGRNSTSSLSGDMSWYLNSQLAERTSVHGVLVDIYGMGVLIQGDSGIGKSETALELVKRGHRLVADDRVDVYAKDEGTLWGEPAEILLHLLEIRGVGIIDVMSLYGASAVRDSSQVQLCICLEHFENDEVFDRLGNSNEEIELQGVKIPRIRIPVKTGRNVSVVIEAAAMNYRAKQMGYDATKTFKDRLTDLISKNGED.

Catalysis depends on residues H138 and K159. 153 to 160 provides a ligand contact to ATP; it reads GDSGIGKS. Residue S160 coordinates Mg(2+). D177 acts as the Proton acceptor; for phosphorylation activity. Proton donor; for dephosphorylation activity in catalysis. An important for the catalytic mechanism of both phosphorylation and dephosphorylation region spans residues 201-210; the sequence is LEIRGVGIID. E202 is a binding site for Mg(2+). Residue R243 is part of the active site. Residues 264 to 269 are important for the catalytic mechanism of dephosphorylation; sequence PVKTGR.

This sequence belongs to the HPrK/P family. As to quaternary structure, homohexamer. The cofactor is Mg(2+).

It catalyses the reaction [HPr protein]-L-serine + ATP = [HPr protein]-O-phospho-L-serine + ADP + H(+). The enzyme catalyses [HPr protein]-O-phospho-L-serine + phosphate + H(+) = [HPr protein]-L-serine + diphosphate. Catalyzes the ATP- as well as the pyrophosphate-dependent phosphorylation of a specific serine residue in HPr, a phosphocarrier protein of the phosphoenolpyruvate-dependent sugar phosphotransferase system (PTS). HprK/P also catalyzes the pyrophosphate-producing, inorganic phosphate-dependent dephosphorylation (phosphorolysis) of seryl-phosphorylated HPr (P-Ser-HPr). The two antagonistic activities of HprK/P are regulated by several intracellular metabolites, which change their concentration in response to the absence or presence of rapidly metabolisable carbon sources (glucose, fructose, etc.) in the growth medium. Therefore, by controlling the phosphorylation state of HPr, HPrK/P is a sensor enzyme that plays a major role in the regulation of carbon metabolism and sugar transport: it mediates carbon catabolite repression (CCR), and regulates PTS-catalyzed carbohydrate uptake and inducer exclusion. The polypeptide is HPr kinase/phosphorylase (Streptococcus thermophilus (strain ATCC BAA-491 / LMD-9)).